Reading from the N-terminus, the 222-residue chain is Protein GrpE (222 aa).

Disordered stretches follow at residues 1–21 (MNDG…ENGQ) and 200–222 (KGGP…PEGA).

Belongs to the GrpE family. As to quaternary structure, homodimer.

Its subcellular location is the cytoplasm. In terms of biological role, participates actively in the response to hyperosmotic and heat shock by preventing the aggregation of stress-denatured proteins, in association with DnaK and GrpE. It is the nucleotide exchange factor for DnaK and may function as a thermosensor. Unfolded proteins bind initially to DnaJ; upon interaction with the DnaJ-bound protein, DnaK hydrolyzes its bound ATP, resulting in the formation of a stable complex. GrpE releases ADP from DnaK; ATP binding to DnaK triggers the release of the substrate protein, thus completing the reaction cycle. Several rounds of ATP-dependent interactions between DnaJ, DnaK and GrpE are required for fully efficient folding. This is Protein GrpE from Chelativorans sp. (strain BNC1).